Consider the following 1003-residue polypeptide: Glycine--tRNA ligase (1003 aa).

Residues 1–310 form a glycine--tRNA ligase alpha subunit region; it reads MSSQPLTLQD…VTAKQIPHIC (310 aa). The segment at 311-1003 is glycine--tRNA ligase beta subunit; sequence QDEDFLLEIG…CFGFYAWDAL (693 aa).

This sequence belongs to the class-II aminoacyl-tRNA synthetase family.

The protein resides in the cytoplasm. The catalysed reaction is tRNA(Gly) + glycine + ATP = glycyl-tRNA(Gly) + AMP + diphosphate. The sequence is that of Glycine--tRNA ligase (glyQS) from Chlamydia muridarum (strain MoPn / Nigg).